Reading from the N-terminus, the 665-residue chain is MLRERTVRLQYGSRVEAVYVLGTYLWTDVYSAAPAGAQTFSLKHSEHVWVEVVRDGEAEEVATNGKQRWLLSPSTTLRVTMSQASTEASSDKVTVNYYDEEGSIPIDQAGLFLTAIEISLDVDADRDGVVEKNNPKKASWTWGPEGQGAILLVNCDRETPWLPKEDCRDEKVYSKEDLKDMSQMILRTKGPDRLPAGYEIVLYISMSDSDKVGVFYVENPFFGQRYIHILGRRKLYHVVKYTGGSAELLFFVEGLCFPDEGFSGLVSIHVSLLEYMAQDIPLTPIFTDTVIFRIAPWIMTPNILPPVSVFVCCMKDNYLFLKEVKNLVEKTNCELKVCFQYLNRGDRWIQDEIEFGYIEAPHKGFPVVLDSPRDGNLKDFPVKELLGPDFGYVTREPLFESVTSLDSFGNLEVSPPVTVNGKTYPLGRILIGSSFPLSGGRRMTKVVRDFLKAQQVQAPVELYSDWLTVGHVDEFMSFVPIPGTKKFLLLMASTSACYKLFREKQKDGHGEAIMFKGLGGMSSKRITINKILSNESLVQENLYFQRCLDWNRDILKKELGLTEQDIIDLPALFKMDEDHRARAFFPNMVNMIVLDKDLGIPKPFGPQVEEECCLEMHVRGLLEPLGLECTFIDDISAYHKFLGEVHCGTNVRRKPFTFKWWHMVP.

Positions 123, 125, 127, 129, 131, 154, 156, 158, 166, 169, 171, 177, 180, 354, 389, 408, 411, and 412 each coordinate Ca(2+). The Nucleophile role is filled by Cys647.

The protein belongs to the protein arginine deiminase family. As to quaternary structure, homodimer. Ca(2+) serves as cofactor. Detected in keratinocytes in epidermis (at protein level).

The protein resides in the cytoplasm. The enzyme catalyses L-arginyl-[protein] + H2O = L-citrullyl-[protein] + NH4(+). In terms of biological role, catalyzes the deimination of arginine residues of proteins. This is Protein-arginine deiminase type-2 (PADI2) from Homo sapiens (Human).